Here is a 325-residue protein sequence, read N- to C-terminus: MDNKSVLLDGYGRRINYLRISVTDRCNLRCMYCMPQEGIPKRAHHDIMTLEELQEVAVALVELGIDKIRITGGEPLVRKGIVGLVRELSKCEGLNEITLTTNGLLLSEYARELKAAGLKRVNISLDTLNPQKFEYITRGGSLEKVLEGIKEAQSVGLTPIKLNTVLIGGFNDDEIEDFVALTVDNEIDVRFIELMPYRTGSRLWSLEKFISSDSVLKKVPSLEKIKSEDISSPAEYYRIPGALGKVGLINPITCKFCENCNRLRLTSDGKLKLCLHSDSEIDLAGPLRRGEDIRGIVLDEIKNKPREHSLEDGEYIKRDMFKIGG.

Positions 10–229 (GYGRRINYLR…PSLEKIKSED (220 aa)) constitute a Radical SAM core domain. A GTP-binding site is contributed by arginine 19. [4Fe-4S] cluster-binding residues include cysteine 26 and cysteine 30. S-adenosyl-L-methionine is bound at residue tyrosine 32. Position 33 (cysteine 33) interacts with [4Fe-4S] cluster. Arginine 69 provides a ligand contact to GTP. Glycine 73 provides a ligand contact to S-adenosyl-L-methionine. Threonine 100 serves as a coordination point for GTP. Serine 124 is a binding site for S-adenosyl-L-methionine. Lysine 161 contributes to the GTP binding site. S-adenosyl-L-methionine is bound at residue methionine 195. The [4Fe-4S] cluster site is built by cysteine 257 and cysteine 260. A GTP-binding site is contributed by 262–264 (RLR). Cysteine 274 provides a ligand contact to [4Fe-4S] cluster.

This sequence belongs to the radical SAM superfamily. MoaA family. Monomer and homodimer. The cofactor is [4Fe-4S] cluster.

It catalyses the reaction GTP + AH2 + S-adenosyl-L-methionine = (8S)-3',8-cyclo-7,8-dihydroguanosine 5'-triphosphate + 5'-deoxyadenosine + L-methionine + A + H(+). It participates in cofactor biosynthesis; molybdopterin biosynthesis. Its function is as follows. Catalyzes the cyclization of GTP to (8S)-3',8-cyclo-7,8-dihydroguanosine 5'-triphosphate. This Peptoclostridium acidaminophilum (Eubacterium acidaminophilum) protein is GTP 3',8-cyclase.